The following is a 360-amino-acid chain: Uroporphyrinogen decarboxylase (360 aa).

Residues 31-35 (RQAGR), D81, Y157, T212, and H333 each bind substrate.

It belongs to the uroporphyrinogen decarboxylase family. In terms of assembly, homodimer.

It is found in the cytoplasm. The enzyme catalyses uroporphyrinogen III + 4 H(+) = coproporphyrinogen III + 4 CO2. It functions in the pathway porphyrin-containing compound metabolism; protoporphyrin-IX biosynthesis; coproporphyrinogen-III from 5-aminolevulinate: step 4/4. Functionally, catalyzes the decarboxylation of four acetate groups of uroporphyrinogen-III to yield coproporphyrinogen-III. The sequence is that of Uroporphyrinogen decarboxylase from Janthinobacterium sp. (strain Marseille) (Minibacterium massiliensis).